We begin with the raw amino-acid sequence, 187 residues long: MYAGGRVVRSAFARGKVCYLIGSVLWGSVSCTQPRVQKWVQNDGKVNVHSPQERAGVVATFGTVRITRSDYERTKAELQDVVAHLNRITAERDYHKWLVYLSDAYRRAYSMPDILQQSSDALPKKGVRLRHLRDYFIHVFVPSRQNVRVDSIVFESPTRVDVIMNHGGKALLVYKIEKIHSAWKLLP.

The first 17 residues, 1–17 (MYAGGRVVRSAFARGKV), serve as a signal peptide directing secretion. Cys-18 carries N-palmitoyl cysteine lipidation. The S-diacylglycerol cysteine moiety is linked to residue Cys-18.

The protein localises to the cell membrane. This is an uncharacterized protein from Treponema pallidum (strain Nichols).